The following is a 216-amino-acid chain: MKQDSRFPNLFILDHPLIQHKLTHMRDKDTSTRTFRELLREITLLMGYEITRNLPITTKRVETPLVEIDAPVIAGKKLAIVPVLRAGVGMSDGLLELIPSARVGHIGVYRADDHRPVEYLVRLPDLEDRIFILCDPMVATGYSAAHAIDVLKRRGVPGERLMFLALVAAPEGVQVFQDAHPDVKLYVASLDSHLDDHAYIVPGLGDAGDRLFGTKN.

5-phospho-alpha-D-ribose 1-diphosphate-binding positions include Arg-85, Arg-110, and 135 to 143 (DPMVATGYS). Uracil-binding positions include Ile-200 and 205–207 (GDA). Asp-206 contacts 5-phospho-alpha-D-ribose 1-diphosphate.

This sequence belongs to the UPRTase family. Requires Mg(2+) as cofactor.

The catalysed reaction is UMP + diphosphate = 5-phospho-alpha-D-ribose 1-diphosphate + uracil. It functions in the pathway pyrimidine metabolism; UMP biosynthesis via salvage pathway; UMP from uracil: step 1/1. Allosterically activated by GTP. Catalyzes the conversion of uracil and 5-phospho-alpha-D-ribose 1-diphosphate (PRPP) to UMP and diphosphate. The chain is Uracil phosphoribosyltransferase from Burkholderia mallei (strain NCTC 10247).